We begin with the raw amino-acid sequence, 349 residues long: MALLRKINQVLLFLLIVTLCVILYKKVHKGTVPKNDADDESETPEELEEEIPVVICAAAGRMGATMAAINSIYSNTDANILFYVVGLRNTLTRIRKWIEHSKLREINFKIVEFNPMVLKGKIRPDSSRPELLQPLNFVRFYLPLLIHQHEKVIYLDDDVIVQGDIQELYDTTLALGHAAAFSDDCDLPSAQDINRLVGLQNTYMGYLDYRKKAIKDLGISPSTCSFNPGVIVANMTEWKHQRITKQLEKWMQKNVEENLYSSSLGGGVATSPMLIVFHGKYSTINPLWHIRHLGWNPDARYSEHFLQEAKLLHWNGRHKPWDFPSVHNDLWESWFVPDPAGIFKLNHHS.

Residues 1-6 (MALLRK) are Cytoplasmic-facing. A helical; Signal-anchor for type II membrane protein transmembrane segment spans residues 7–24 (INQVLLFLLIVTLCVILY). Residues 25-349 (KKVHKGTVPK…AGIFKLNHHS (325 aa)) are Lumenal-facing. Residue N234 is glycosylated (N-linked (GlcNAc...) asparagine).

Belongs to the glycosyltransferase 8 family.

It is found in the membrane. The polypeptide is Glycosyltransferase 8 domain-containing protein 2 (GLT8D2) (Homo sapiens (Human)).